The following is a 275-amino-acid chain: Formamidopyrimidine-DNA glycosylase (275 aa).

The active-site Schiff-base intermediate with DNA is the proline 2. The active-site Proton donor is glutamate 3. Lysine 58 functions as the Proton donor; for beta-elimination activity in the catalytic mechanism. DNA contacts are provided by histidine 93, arginine 111, and arginine 156. Residues phenylalanine 241–arginine 275 form an FPG-type zinc finger. Arginine 265 serves as the catalytic Proton donor; for delta-elimination activity.

Belongs to the FPG family. In terms of assembly, monomer. Zn(2+) serves as cofactor.

It carries out the reaction Hydrolysis of DNA containing ring-opened 7-methylguanine residues, releasing 2,6-diamino-4-hydroxy-5-(N-methyl)formamidopyrimidine.. The catalysed reaction is 2'-deoxyribonucleotide-(2'-deoxyribose 5'-phosphate)-2'-deoxyribonucleotide-DNA = a 3'-end 2'-deoxyribonucleotide-(2,3-dehydro-2,3-deoxyribose 5'-phosphate)-DNA + a 5'-end 5'-phospho-2'-deoxyribonucleoside-DNA + H(+). Involved in base excision repair of DNA damaged by oxidation or by mutagenic agents. Acts as a DNA glycosylase that recognizes and removes damaged bases. Has a preference for oxidized purines, such as 7,8-dihydro-8-oxoguanine (8-oxoG). Has AP (apurinic/apyrimidinic) lyase activity and introduces nicks in the DNA strand. Cleaves the DNA backbone by beta-delta elimination to generate a single-strand break at the site of the removed base with both 3'- and 5'-phosphates. This chain is Formamidopyrimidine-DNA glycosylase, found in Burkholderia vietnamiensis (strain G4 / LMG 22486) (Burkholderia cepacia (strain R1808)).